The sequence spans 217 residues: Proteasome subunit beta type-9 (217 aa).

A propeptide spans 1-18 (removed in mature form); it reads MLDESLEPGWLSEEVKTG. T19 serves as the catalytic Nucleophile.

It belongs to the peptidase T1B family. In terms of assembly, the 26S proteasome consists of a 20S proteasome core and two 19S regulatory subunits. The 20S proteasome core is composed of 28 subunits that are arranged in four stacked rings, resulting in a barrel-shaped structure. The two end rings are each formed by seven alpha subunits, and the two central rings are each formed by seven beta subunits. The catalytic chamber with the active sites is on the inside of the barrel. Component of the immunoproteasome, where it displaces the equivalent housekeeping subunit PSMB6. Autocleaved. The resulting N-terminal Thr residue of the mature subunit is responsible for the nucleophile proteolytic activity.

Its subcellular location is the cytoplasm. The protein localises to the nucleus. The enzyme catalyses Cleavage of peptide bonds with very broad specificity.. Its function is as follows. The proteasome is a multicatalytic proteinase complex which is characterized by its ability to cleave peptides with Arg, Phe, Tyr, Leu, and Glu adjacent to the leaving group at neutral or slightly basic pH. The proteasome has an ATP-dependent proteolytic activity. This subunit is involved in antigen processing to generate class I binding peptides. This Oncorhynchus mykiss (Rainbow trout) protein is Proteasome subunit beta type-9 (psmb9).